Consider the following 567-residue polypeptide: Potassium-transporting ATPase potassium-binding subunit (567 aa).

11 consecutive transmembrane segments (helical) span residues 5-25 (GWIQ…PLGF), 64-84 (TAYA…LYAL), 136-156 (GLTV…IALI), 179-199 (LYVL…LGIP), 254-274 (ISNL…TNVF), 285-305 (WAIL…CYWA), 330-350 (FGIA…CGAV), 357-376 (FTAL…EVIV), 421-441 (MLAI…AVVL), 486-506 (ITIG…ALAI), and 529-549 (LFVG…FFPA).

Belongs to the KdpA family. As to quaternary structure, the system is composed of three essential subunits: KdpA, KdpB and KdpC.

The protein resides in the cell inner membrane. Functionally, part of the high-affinity ATP-driven potassium transport (or Kdp) system, which catalyzes the hydrolysis of ATP coupled with the electrogenic transport of potassium into the cytoplasm. This subunit binds the periplasmic potassium ions and delivers the ions to the membrane domain of KdpB through an intramembrane tunnel. This chain is Potassium-transporting ATPase potassium-binding subunit, found in Mesorhizobium japonicum (strain LMG 29417 / CECT 9101 / MAFF 303099) (Mesorhizobium loti (strain MAFF 303099)).